We begin with the raw amino-acid sequence, 591 residues long: Calnexin (591 aa).

Residues 1 to 20 (MEGKWLLCLLLVLGTAAIQA) form the signal peptide. The Lumenal segment spans residues 21-482 (HDGHDDDMID…QMLEAAEERP (462 aa)). Residues S75 and D118 each contribute to the Ca(2+) site. K138 is subject to N6-acetyllysine. A disulfide bridge links C161 with C195. An alpha-D-glucoside is bound by residues Y165, K167, Y186, and D193. The tract at residues 261–347 (GNLLNDMTPP…EKPEDWDEDM (87 aa)) is disordered. A compositionally biased stretch (basic and acidic residues) spans 275–320 (REIEDPEDRKPEDWDERPKIADPDAVKPDDWDEDAPSKIPDEEATK). A p domain (Extended arm) region spans residues 277–410 (IEDPEDRKPE…RKIPNPDFFE (134 aa)). 5 consecutive repeat copies span residues 279-291 (DPED…WDER), 296-308 (DPDA…WDED), 315-327 (DEEA…WLDD), 334-346 (DPDA…WDED), and 349-359 (GEWEAPQIANP). 2 4 X approximate repeats regions span residues 279 to 346 (DPED…WDED) and 349 to 406 (GEWE…IPNP). A compositionally biased stretch (acidic residues) spans 324 to 347 (WLDDEPEYIPDPDAEKPEDWDEDM). An interaction with PPIB region spans residues 327 to 360 (DEPEYIPDPDAEKPEDWDEDMDGEWEAPQIANPK). A disulfide bridge links C361 with C367. A run of 3 repeats spans residues 368-378 (GVWQRPMIDNP), 382-392 (GKWKPPMIDNP), and 396-406 (GIWKPRKIPNP). E426 contributes to the an alpha-D-glucoside binding site. D437 contributes to the Ca(2+) binding site. Residues 483–503 (WLWVVYILTVALPVFLVILFC) form a helical membrane-spanning segment. S-palmitoyl cysteine attachment occurs at residues C503 and C504. The Cytoplasmic portion of the chain corresponds to 504-591 (CSGKKQSNAM…SPRNRKPRRE (88 aa)). The tract at residues 504–591 (CSGKKQSNAM…SPRNRKPRRE (88 aa)) is sufficient to mediate interaction with SGIP1. Basic and acidic residues predominate over residues 514-538 (EYKKTDAPQPDVKDEEGKEEEKNKG). Residues 514–591 (EYKKTDAPQP…SPRNRKPRRE (78 aa)) form a disordered region. Position 553 is a phosphoserine (S553). Residues 555–568 (AEEDGGTGSQDEED) are compositionally biased toward acidic residues. A Phosphothreonine modification is found at T561. At S563 the chain carries Phosphoserine; by MAPK3. S582 carries the phosphoserine modification.

It belongs to the calreticulin family. As to quaternary structure, interacts with MAPK3/ERK1. Interacts with KCNH2. Associates with ribosomes. Interacts with SGIP1; involved in negative regulation of endocytosis. The palmitoylated form interacts with the ribosome-translocon complex component SSR1, promoting efficient folding of glycoproteins. Interacts with SERPINA2P/SERPINA2 and with the S and Z variants of SERPINA1. Interacts with PPIB. Interacts with ZNRF4. Interacts with SMIM22. Interacts with TMX2. Interacts with TMEM35A/NACHO and CHRNA7. Interacts with reticulophagy regulators RETREG2 and RETREG3. Interacts with DNM1L; may form part of a larger protein complex at the ER-mitochondrial interface during mitochondrial fission. Interacts with ADAM7. In terms of processing, phosphorylated at Ser-563 by MAPK3/ERK1. Phosphorylation by MAPK3/ERK1 increases its association with ribosomes. Palmitoylation by DHHC6 leads to the preferential localization to the perinuclear rough ER. It mediates the association of calnexin with the ribosome-translocon complex (RTC) which is required for efficient folding of glycosylated proteins. Post-translationally, ubiquitinated, leading to proteasomal degradation. Probably ubiquitinated by ZNRF4.

Its subcellular location is the endoplasmic reticulum membrane. It localises to the mitochondrion membrane. It is found in the melanosome membrane. Functionally, calcium-binding protein that interacts with newly synthesized monoglucosylated glycoproteins in the endoplasmic reticulum. It may act in assisting protein assembly and/or in the retention within the ER of unassembled protein subunits. It seems to play a major role in the quality control apparatus of the ER by the retention of incorrectly folded proteins. Associated with partial T-cell antigen receptor complexes that escape the ER of immature thymocytes, it may function as a signaling complex regulating thymocyte maturation. Additionally it may play a role in receptor-mediated endocytosis at the synapse. This is Calnexin (Canx) from Rattus norvegicus (Rat).